We begin with the raw amino-acid sequence, 85 residues long: UPF0386 protein MXAN_1729 (85 aa).

This sequence belongs to the UPF0386 family.

In Myxococcus xanthus (strain DK1622), this protein is UPF0386 protein MXAN_1729.